Reading from the N-terminus, the 311-residue chain is L-lactate dehydrogenase 2 (311 aa).

The NAD(+) site is built by Val-14, Asp-35, and Arg-40. Arg-90 serves as a coordination point for substrate. NAD(+)-binding positions include Ser-103, 120 to 122 (ATN), and Thr-145. 122-125 (NPCD) provides a ligand contact to substrate. 150 to 153 (DTTR) is a binding site for substrate. The active-site Proton acceptor is the His-177. Thr-230 lines the substrate pocket.

Belongs to the LDH/MDH superfamily. LDH family. In terms of assembly, homotetramer.

The protein resides in the cytoplasm. The enzyme catalyses (S)-lactate + NAD(+) = pyruvate + NADH + H(+). It participates in fermentation; pyruvate fermentation to lactate; (S)-lactate from pyruvate: step 1/1. In terms of biological role, catalyzes the conversion of lactate to pyruvate. In Listeria innocua serovar 6a (strain ATCC BAA-680 / CLIP 11262), this protein is L-lactate dehydrogenase 2.